We begin with the raw amino-acid sequence, 420 residues long: Glutamate-1-semialdehyde 2,1-aminomutase (420 aa).

The residue at position 259 (lysine 259) is an N6-(pyridoxal phosphate)lysine.

This sequence belongs to the class-III pyridoxal-phosphate-dependent aminotransferase family. HemL subfamily. Requires pyridoxal 5'-phosphate as cofactor.

The protein localises to the cytoplasm. It catalyses the reaction (S)-4-amino-5-oxopentanoate = 5-aminolevulinate. It participates in porphyrin-containing compound metabolism; protoporphyrin-IX biosynthesis; 5-aminolevulinate from L-glutamyl-tRNA(Glu): step 2/2. In Methanothermobacter thermautotrophicus (strain ATCC 29096 / DSM 1053 / JCM 10044 / NBRC 100330 / Delta H) (Methanobacterium thermoautotrophicum), this protein is Glutamate-1-semialdehyde 2,1-aminomutase (hemL).